The following is a 223-amino-acid chain: Methanol utilization control regulatory protein MoxX (223 aa).

The Response regulatory domain occupies 16 to 133 (QILIVDDHPV…EICAAFTEVA (118 aa)). One can recognise an HTH luxR-type domain in the interval 155 to 220 (PGTSAPRLTG…DLVVKGIRYF (66 aa)). Positions 179 to 198 (YRDIADRACISYKTVSNVSL) form a DNA-binding region, H-T-H motif.

In terms of processing, phosphorylated by MoxY.

The protein localises to the cytoplasm. In terms of biological role, member of the two-component regulatory system MoxY/MoxX probably involved in the regulation of the methanol dehydrogenase expression. The sequence is that of Methanol utilization control regulatory protein MoxX (moxX) from Paracoccus denitrificans.